The chain runs to 484 residues: Malonate-semialdehyde dehydrogenase 3 (484 aa).

Residues phenylalanine 152, lysine 176, glutamate 179, arginine 180, and serine 229 each contribute to the NAD(+) site. The Nucleophile role is filled by cysteine 284. Position 384 (glutamate 384) interacts with NAD(+).

Belongs to the aldehyde dehydrogenase family. IolA subfamily. As to quaternary structure, homotetramer.

The catalysed reaction is 3-oxopropanoate + NAD(+) + CoA + H2O = hydrogencarbonate + acetyl-CoA + NADH + H(+). It carries out the reaction 2-methyl-3-oxopropanoate + NAD(+) + CoA + H2O = propanoyl-CoA + hydrogencarbonate + NADH + H(+). The protein operates within polyol metabolism; myo-inositol degradation into acetyl-CoA; acetyl-CoA from myo-inositol: step 7/7. In terms of biological role, catalyzes the oxidation of malonate semialdehyde (MSA) and methylmalonate semialdehyde (MMSA) into acetyl-CoA and propanoyl-CoA, respectively. Is involved in a myo-inositol catabolic pathway. Bicarbonate, and not CO2, is the end-product of the enzymatic reaction. This is Malonate-semialdehyde dehydrogenase 3 from Geobacillus kaustophilus (strain HTA426).